The sequence spans 177 residues: Large ribosomal subunit protein uL6 (177 aa).

It belongs to the universal ribosomal protein uL6 family. As to quaternary structure, part of the 50S ribosomal subunit.

This protein binds to the 23S rRNA, and is important in its secondary structure. It is located near the subunit interface in the base of the L7/L12 stalk, and near the tRNA binding site of the peptidyltransferase center. This is Large ribosomal subunit protein uL6 from Shewanella amazonensis (strain ATCC BAA-1098 / SB2B).